Here is a 304-residue protein sequence, read N- to C-terminus: Porphobilinogen deaminase (304 aa).

An S-(dipyrrolylmethanemethyl)cysteine modification is found at Cys240.

Belongs to the HMBS family. As to quaternary structure, monomer. Requires dipyrromethane as cofactor.

The enzyme catalyses 4 porphobilinogen + H2O = hydroxymethylbilane + 4 NH4(+). It participates in porphyrin-containing compound metabolism; protoporphyrin-IX biosynthesis; coproporphyrinogen-III from 5-aminolevulinate: step 2/4. Tetrapolymerization of the monopyrrole PBG into the hydroxymethylbilane pre-uroporphyrinogen in several discrete steps. The protein is Porphobilinogen deaminase of Xanthomonas axonopodis pv. citri (strain 306).